Reading from the N-terminus, the 313-residue chain is Putative zinc finger protein 077L (313 aa).

A C3H1-type zinc finger spans residues C174–H199. Residues S294–F313 are disordered. Residues D296–F313 are compositionally biased toward acidic residues.

The protein belongs to the IIV-6 077L family.

The polypeptide is Putative zinc finger protein 077L (Invertebrate iridescent virus 6 (IIV-6)).